The primary structure comprises 185 residues: Homeobox-leucine zipper protein ATHB-22 (185 aa).

The homeobox DNA-binding region spans 76 to 135; it reads TSEQLKFLERSFQEEIKLNPDRKMKLNPDRKMKLSKELGLQPRQIAVWFQNRKARWKNKQ. Residues 136-164 form a leucine-zipper region; sequence LEHLYESLRQEFDIVSREKELLQEELIQL.

The protein belongs to the HD-ZIP homeobox family. Class I subfamily. Expressed in siliques.

The protein localises to the nucleus. Probable transcription factor. This Arabidopsis thaliana (Mouse-ear cress) protein is Homeobox-leucine zipper protein ATHB-22 (ATHB-22).